We begin with the raw amino-acid sequence, 223 residues long: 23 kDa piroplasm membrane protein (223 aa).

A signal peptide spans 1-19; sequence MHKFTKVFFVAILVHTLKS. The Extracellular segment spans residues 20–197; the sequence is GLVFTPVSGT…EEEKSDKKKY (178 aa). The N-linked (GlcNAc...) asparagine glycan is linked to Asn-69. Residues 198 to 218 form a helical membrane-spanning segment; the sequence is VLMVVVVVVFVVVASLVVFLV. At 219 to 223 the chain is on the cytoplasmic side; it reads KFCLK.

The protein localises to the membrane. The protein is 23 kDa piroplasm membrane protein of Theileria buffeli.